The sequence spans 354 residues: Peptide chain release factor 1 (354 aa).

Gln-233 is modified (N5-methylglutamine).

This sequence belongs to the prokaryotic/mitochondrial release factor family. Post-translationally, methylated by PrmC. Methylation increases the termination efficiency of RF1.

The protein resides in the cytoplasm. Functionally, peptide chain release factor 1 directs the termination of translation in response to the peptide chain termination codons UAG and UAA. The chain is Peptide chain release factor 1 from Clostridioides difficile (strain 630) (Peptoclostridium difficile).